The sequence spans 153 residues: Bacteriohemerythrin (153 aa).

Fe cation-binding residues include histidine 21, histidine 57, glutamate 61, histidine 76, histidine 80, histidine 115, and aspartate 120.

Belongs to the hemerythrin family. In terms of assembly, monomer.

Its function is as follows. Oxygen-binding protein. May be involved in a storage mechanism or for delivery to oxygen-requiring enzymes. The oxygen-binding site contains two iron atoms. This Stenotrophomonas maltophilia (strain R551-3) protein is Bacteriohemerythrin.